Reading from the N-terminus, the 262-residue chain is Glutamate 5-kinase (262 aa).

K14 serves as a coordination point for ATP. The substrate site is built by S54, D141, and N153. ATP-binding positions include 173–174 (SD) and 214–220 (TGGMVTK).

Belongs to the glutamate 5-kinase family.

The protein resides in the cytoplasm. The enzyme catalyses L-glutamate + ATP = L-glutamyl 5-phosphate + ADP. The protein operates within amino-acid biosynthesis; L-proline biosynthesis; L-glutamate 5-semialdehyde from L-glutamate: step 1/2. Functionally, catalyzes the transfer of a phosphate group to glutamate to form L-glutamate 5-phosphate. The polypeptide is Glutamate 5-kinase (Symbiobacterium thermophilum (strain DSM 24528 / JCM 14929 / IAM 14863 / T)).